The following is a 342-amino-acid chain: Uricase (342 aa).

Catalysis depends on charge relay system residues lysine 35 and threonine 80. Urate contacts are provided by threonine 80, aspartate 81, phenylalanine 204, arginine 221, valine 269, glutamine 270, and asparagine 296. The active-site Charge relay system is histidine 298. The Microbody targeting signal motif lies at 340-342; it reads SHL.

The protein belongs to the uricase family. Malpighian tubules.

The protein localises to the peroxisome. It carries out the reaction urate + O2 + H2O = 5-hydroxyisourate + H2O2. The protein operates within purine metabolism; urate degradation; (S)-allantoin from urate: step 1/3. Its activity is regulated as follows. Repressed by 20-hydroxyecdysone. In terms of biological role, catalyzes the oxidation of uric acid to 5-hydroxyisourate, which is further processed to form (S)-allantoin. This chain is Uricase (Uro), found in Drosophila virilis (Fruit fly).